The sequence spans 651 residues: UvrABC system protein C (651 aa).

The GIY-YIG domain maps to 20–97 (ERCGVYRMFD…IKKFQPKFNI (78 aa)). In terms of domain architecture, UVR spans 207–242 (KALQENLSKKMEELSSQMRFEEAAEIRDRIKALSYV).

It belongs to the UvrC family. As to quaternary structure, interacts with UvrB in an incision complex.

It localises to the cytoplasm. The UvrABC repair system catalyzes the recognition and processing of DNA lesions. UvrC both incises the 5' and 3' sides of the lesion. The N-terminal half is responsible for the 3' incision and the C-terminal half is responsible for the 5' incision. The polypeptide is UvrABC system protein C (Rickettsia akari (strain Hartford)).